Reading from the N-terminus, the 757-residue chain is Xaa-Pro dipeptidyl-peptidase (757 aa).

Active-site charge relay system residues include Ser-348, Asp-468, and His-498.

The protein belongs to the peptidase S15 family. As to quaternary structure, homodimer.

It localises to the cytoplasm. It carries out the reaction Hydrolyzes Xaa-Pro-|- bonds to release unblocked, N-terminal dipeptides from substrates including Ala-Pro-|-p-nitroanilide and (sequentially) Tyr-Pro-|-Phe-Pro-|-Gly-Pro-|-Ile.. Functionally, removes N-terminal dipeptides sequentially from polypeptides having unsubstituted N-termini provided that the penultimate residue is proline. This is Xaa-Pro dipeptidyl-peptidase from Streptococcus pneumoniae (strain ATCC 700669 / Spain 23F-1).